Consider the following 483-residue polypeptide: GDP-fucose protein O-fucosyltransferase 3 (483 aa).

Residues 1–8 (MVRIPRRK) lie on the Cytoplasmic side of the membrane. A helical; Signal-anchor for type II membrane protein membrane pass occupies residues 9–31 (LLPSCLCMTATVFLMVTVQVLVE). Residues 32–483 (LGKFERKKFK…FWALVFKDSF (452 aa)) lie on the Lumenal side of the membrane. The segment at 45–64 (LQDGQKDVEGDPKHLNPLPK) is disordered. N-linked (GlcNAc...) asparagine glycosylation is found at N110, N168, and N318. A disulfide bridge connects residues C389 and C392. N468 is a glycosylation site (N-linked (GlcNAc...) asparagine).

This sequence belongs to the glycosyltransferase 10 family.

It localises to the endoplasmic reticulum membrane. The catalysed reaction is L-threonyl-[protein] + GDP-beta-L-fucose = 3-O-(alpha-L-fucosyl)-L-threonyl-[protein] + GDP + H(+). The enzyme catalyses L-seryl-[protein] + GDP-beta-L-fucose = 3-O-(alpha-L-fucosyl)-L-seryl-[protein] + GDP + H(+). It functions in the pathway protein modification; protein glycosylation. Its function is as follows. Protein O-fucosyltransferase that specifically catalyzes O-fucosylation of serine or threonine residues in EMI domains of target proteins, such as MMRN1, MMRN2 and EMID1. Attaches fucose through an O-glycosidic linkage. O-fucosylation of EMI domain-containing proteins may be required for facilitating protein folding and secretion. May also show alpha-(1,3)-fucosyltransferase activity toward the innermost N-acetyl glucosamine (GlcNAc) residue in biantennary N-glycan acceptors. However, this was tested with a library of synthetic substrates and this activity is unsure in vivo. May be involved in biosynthesis of Lewis X-carrying biantennary N-glycans that regulate neuron stem cell self-renewal during brain development. This is GDP-fucose protein O-fucosyltransferase 3 (Fut10) from Rattus norvegicus (Rat).